The following is a 250-amino-acid chain: 2,3-bisphosphoglycerate-dependent phosphoglycerate mutase (250 aa).

Residues 10–17 (RHGESQWN), 23–24 (TG), arginine 62, 89–92 (ERHY), lysine 100, 116–117 (RR), and 185–186 (GN) each bind substrate. Histidine 11 acts as the Tele-phosphohistidine intermediate in catalysis. Glutamate 89 acts as the Proton donor/acceptor in catalysis.

Belongs to the phosphoglycerate mutase family. BPG-dependent PGAM subfamily. Homodimer.

The enzyme catalyses (2R)-2-phosphoglycerate = (2R)-3-phosphoglycerate. It functions in the pathway carbohydrate degradation; glycolysis; pyruvate from D-glyceraldehyde 3-phosphate: step 3/5. Catalyzes the interconversion of 2-phosphoglycerate and 3-phosphoglycerate. This chain is 2,3-bisphosphoglycerate-dependent phosphoglycerate mutase, found in Shigella boydii serotype 4 (strain Sb227).